Here is a 161-residue protein sequence, read N- to C-terminus: Transcriptional repressor NrdR (161 aa).

Residues 3-34 (CPFCGKYDTKVTDSRLVAEGDQVRRRRQCNDC) fold into a zinc finger. Positions 49–139 (PRVIKGDGSR…VYRRFQDLDE (91 aa)) constitute an ATP-cone domain.

Belongs to the NrdR family. Zn(2+) is required as a cofactor.

Negatively regulates transcription of bacterial ribonucleotide reductase nrd genes and operons by binding to NrdR-boxes. This Chromohalobacter salexigens (strain ATCC BAA-138 / DSM 3043 / CIP 106854 / NCIMB 13768 / 1H11) protein is Transcriptional repressor NrdR.